The following is a 639-amino-acid chain: Phosphomethylpyrimidine synthase (639 aa).

A disordered region spans residues 49 to 71 (DTPTDFGGEQNRPVRVYDTSGPY). Substrate contacts are provided by residues Asn-231, Met-260, Tyr-289, His-325, 345–347 (SRG), 386–389 (DGLR), and Glu-425. A Zn(2+)-binding site is contributed by His-429. Tyr-452 lines the substrate pocket. His-493 is a binding site for Zn(2+). 3 residues coordinate [4Fe-4S] cluster: Cys-573, Cys-576, and Cys-581.

Belongs to the ThiC family. As to quaternary structure, homodimer. It depends on [4Fe-4S] cluster as a cofactor.

The catalysed reaction is 5-amino-1-(5-phospho-beta-D-ribosyl)imidazole + S-adenosyl-L-methionine = 4-amino-2-methyl-5-(phosphooxymethyl)pyrimidine + CO + 5'-deoxyadenosine + formate + L-methionine + 3 H(+). The protein operates within cofactor biosynthesis; thiamine diphosphate biosynthesis. In terms of biological role, catalyzes the synthesis of the hydroxymethylpyrimidine phosphate (HMP-P) moiety of thiamine from aminoimidazole ribotide (AIR) in a radical S-adenosyl-L-methionine (SAM)-dependent reaction. The sequence is that of Phosphomethylpyrimidine synthase from Teredinibacter turnerae (strain ATCC 39867 / T7901).